A 299-amino-acid polypeptide reads, in one-letter code: MKLSKLSILTSALATSALAAPAVVTVTEHAHEAAVVTVQGVVYVENGQTRTTYETLAPASTATPTSTATALVAPPVAPSSASSNSDVVLSALKNLASVWGKTTDSTTTLTSSESTSQSLAQATTTSTPAAASTTSTPAATTTTSQAAATSSASSSDSDLSDFASSVLAEHNKKRALHKDTPALSWSDTLASYAQDYADNYDCSGTLTHSGGPYGENLALGYDGPAAVDAWYNEISNYDFSNPGFSSNTGHFTQVVWKSTTQVGCGIKTCGGAWGDYVICSYDPAGNYEGEYADNVEPLA.

An N-terminal signal peptide occupies residues 1 to 19 (MKLSKLSILTSALATSALA). Residues 103-157 (TDSTTTLTSSESTSQSLAQATTTSTPAAASTTSTPAATTTTSQAAATSSASSSDS) form a disordered region. An SCP domain is found at 167–281 (LAEHNKKRAL…AWGDYVICSY (115 aa)).

Belongs to the CRISP family. O-glycosylated.

The protein localises to the secreted. Functionally, secreted protein required for efficient export of lipids such as acetylated sterols. Acts in detoxification of hydrophobic compounds. The polypeptide is Protein PRY1 (Saccharomyces cerevisiae (strain ATCC 204508 / S288c) (Baker's yeast)).